Reading from the N-terminus, the 249-residue chain is Probable transcriptional regulatory protein Wbm0670 (249 aa).

It belongs to the TACO1 family.

The protein resides in the cytoplasm. The sequence is that of Probable transcriptional regulatory protein Wbm0670 from Wolbachia sp. subsp. Brugia malayi (strain TRS).